Here is a 763-residue protein sequence, read N- to C-terminus: Phosphoglycerol transferase I (763 aa).

A run of 4 helical transmembrane segments spans residues 1 to 21 (MSEL…AWKA), 26 to 46 (WWFA…ITLF), 77 to 97 (ILPG…LGWI), and 108 to 128 (FGYS…SPAF).

This sequence belongs to the OpgB family.

It is found in the cell inner membrane. It catalyses the reaction a phosphatidylglycerol + a membrane-derived-oligosaccharide D-glucose = a 1,2-diacyl-sn-glycerol + a membrane-derived-oligosaccharide 6-(glycerophospho)-D-glucose.. It participates in glycan metabolism; osmoregulated periplasmic glucan (OPG) biosynthesis. Its function is as follows. Transfers a phosphoglycerol residue from phosphatidylglycerol to the membrane-bound nascent glucan backbones. The chain is Phosphoglycerol transferase I from Escherichia coli O45:K1 (strain S88 / ExPEC).